Here is a 291-residue protein sequence, read N- to C-terminus: 4-hydroxy-tetrahydrodipicolinate synthase (291 aa).

Threonine 44 serves as a coordination point for pyruvate. Tyrosine 132 (proton donor/acceptor) is an active-site residue. Lysine 160 acts as the Schiff-base intermediate with substrate in catalysis. Isoleucine 202 contributes to the pyruvate binding site.

This sequence belongs to the DapA family. As to quaternary structure, homotetramer; dimer of dimers.

The protein localises to the cytoplasm. It catalyses the reaction L-aspartate 4-semialdehyde + pyruvate = (2S,4S)-4-hydroxy-2,3,4,5-tetrahydrodipicolinate + H2O + H(+). Its pathway is amino-acid biosynthesis; L-lysine biosynthesis via DAP pathway; (S)-tetrahydrodipicolinate from L-aspartate: step 3/4. In terms of biological role, catalyzes the condensation of (S)-aspartate-beta-semialdehyde [(S)-ASA] and pyruvate to 4-hydroxy-tetrahydrodipicolinate (HTPA). This is 4-hydroxy-tetrahydrodipicolinate synthase from Zymomonas mobilis subsp. mobilis (strain ATCC 31821 / ZM4 / CP4).